The following is a 138-amino-acid chain: Acidic phospholipase A2 RV-7 (138 aa).

The first 16 residues, 1 to 16, serve as a signal peptide directing secretion; sequence MRTLWIVAVCLIGVEG. 7 disulfide bridges follow: C42/C131, C44/C60, C59/C111, C65/C138, C66/C104, C73/C97, and C91/C102. Ca(2+) contacts are provided by Y43, G45, and G47. Residue H63 is part of the active site. D64 is a Ca(2+) binding site. D105 is a catalytic residue.

The protein belongs to the phospholipase A2 family. Group II subfamily. D49 sub-subfamily. In terms of assembly, heterodimer of a weakly toxic basic protein having phospholipase A2 activity (RV-4) and a non-toxic acidic protein which inhibits its enzymatic activity but potentiates its lethal potency and neurotoxicity (RV-7). Ca(2+) is required as a cofactor. Expressed by the venom gland.

It localises to the secreted. The enzyme catalyses a 1,2-diacyl-sn-glycero-3-phosphocholine + H2O = a 1-acyl-sn-glycero-3-phosphocholine + a fatty acid + H(+). Heterodimer: RV-4/RV-7 targets the presynaptic sites of the neuromuscular junction. In terms of biological role, monomer: snake venom phospholipase A2 (PLA2) RV-7 that has low enzymatic activity and is not toxic. It inhibits the enzymatic activity of RV-4 in vitro but potentiates its lethal potency and neurotoxicity. It may facilitate the specific binding of RV-4 to its presynaptic binding sites, probably by acting as a chaperone, minimizing distraction and destruction of RV-4 en route to the site of action by reducing non-specific binding to muscle and other organs. PLA2 catalyzes the calcium-dependent hydrolysis of the 2-acyl groups in 3-sn-phosphoglycerides. This is Acidic phospholipase A2 RV-7 from Daboia siamensis (Eastern Russel's viper).